Reading from the N-terminus, the 284-residue chain is UDP-N-acetylenolpyruvoylglucosamine reductase (284 aa).

The 163-residue stretch at 12-174 folds into the FAD-binding PCMH-type domain; that stretch reads KIGGRVKYLV…TRVMMSFKRE (163 aa). Residue arginine 153 is part of the active site. Serine 203 acts as the Proton donor in catalysis. The active site involves glutamate 274.

This sequence belongs to the MurB family. It depends on FAD as a cofactor.

The protein resides in the cytoplasm. The enzyme catalyses UDP-N-acetyl-alpha-D-muramate + NADP(+) = UDP-N-acetyl-3-O-(1-carboxyvinyl)-alpha-D-glucosamine + NADPH + H(+). It participates in cell wall biogenesis; peptidoglycan biosynthesis. Cell wall formation. The polypeptide is UDP-N-acetylenolpyruvoylglucosamine reductase (Thermotoga petrophila (strain ATCC BAA-488 / DSM 13995 / JCM 10881 / RKU-1)).